A 72-amino-acid chain; its full sequence is Large ribosomal subunit protein bL28 (72 aa).

It belongs to the bacterial ribosomal protein bL28 family.

The polypeptide is Large ribosomal subunit protein bL28 (Chlorobaculum tepidum (strain ATCC 49652 / DSM 12025 / NBRC 103806 / TLS) (Chlorobium tepidum)).